We begin with the raw amino-acid sequence, 279 residues long: NH(3)-dependent NAD(+) synthetase (279 aa).

46-53 (GISGGQDS) is an ATP binding site. Asp52 contributes to the Mg(2+) binding site. Arg145 provides a ligand contact to deamido-NAD(+). Thr165 provides a ligand contact to ATP. Glu170 contacts Mg(2+). 2 residues coordinate deamido-NAD(+): Lys178 and Asp185. ATP is bound by residues Lys194 and Thr216. 265 to 266 (HK) contributes to the deamido-NAD(+) binding site.

It belongs to the NAD synthetase family. Homodimer.

It carries out the reaction deamido-NAD(+) + NH4(+) + ATP = AMP + diphosphate + NAD(+) + H(+). The protein operates within cofactor biosynthesis; NAD(+) biosynthesis; NAD(+) from deamido-NAD(+) (ammonia route): step 1/1. Functionally, catalyzes the ATP-dependent amidation of deamido-NAD to form NAD. Uses ammonia as a nitrogen source. The sequence is that of NH(3)-dependent NAD(+) synthetase from Rhodococcus jostii (strain RHA1).